Here is a 391-residue protein sequence, read N- to C-terminus: MSKSFAEELEMLKAQGLHRRMRRIAGSQGSRAVVDGKEALLLCSNNYLGLADHPRLAEAAIRAVERYGTSSGASRLVSGTMELHALLEERIARFKGTGAALVFNSGYAANSGIIPALVGKGDVVFSDRLNHASIVDGCLLSRATMVRYPHNDTAALRRLMERHETAGRRLLVTDGVFSMDGDMAPLRELAALKREFGALLMVDDAHGTGVLGATGRGSAELQGVMAEIDIHMGTLGKALGSFGAYAAASEDVIDYLANKARSFIFSTSLPPAVLAASLAAVDLVDSPDGAALRERLARNTAFFREGLCAAGFDTMGSETQIVPLFVGGAEETMAFTARLLEAGVFAQGIRPPTVPAGTCRLRCTLMATHAEEDLARAVALMAAIGKGMGVI.

Substrate is bound at residue R19. 106-107 (GY) lines the pyridoxal 5'-phosphate pocket. Residue H131 participates in substrate binding. Positions 178, 206, and 234 each coordinate pyridoxal 5'-phosphate. K237 is modified (N6-(pyridoxal phosphate)lysine). Residue T353 participates in substrate binding.

Belongs to the class-II pyridoxal-phosphate-dependent aminotransferase family. BioF subfamily. Homodimer. Requires pyridoxal 5'-phosphate as cofactor.

The catalysed reaction is 6-carboxyhexanoyl-[ACP] + L-alanine + H(+) = (8S)-8-amino-7-oxononanoate + holo-[ACP] + CO2. The protein operates within cofactor biosynthesis; biotin biosynthesis. Functionally, catalyzes the decarboxylative condensation of pimeloyl-[acyl-carrier protein] and L-alanine to produce 8-amino-7-oxononanoate (AON), [acyl-carrier protein], and carbon dioxide. In Geobacter metallireducens (strain ATCC 53774 / DSM 7210 / GS-15), this protein is 8-amino-7-oxononanoate synthase.